A 334-amino-acid polypeptide reads, in one-letter code: MLTYAQAGVDEEKTAKALRAIIDAARRTFKFRMNKIGEPGDIGHYSALLDFKDFYLAITTDGVGTKILVAEAVNKFDTIGIDMIAMNVNDLICVGAEPVALVDYLAVKEPNEDVFQQIAKGLYEGAKEAGIAIVGGETAVMPDLINGYDLAGTAVGIVEKDKVVTGEKIKPDDIVIGISSSGIHSNGLTLARKLLIPKYGLDYEYNGKKLWEWLLEPTRIYVKPILKLINEVEVHGLAHITGGGLLNLKRLTKYGFELEMPPIDGIFKLIYENGVPLEEMFRVFNMGVGFMVIVPQEEKENALQILNKYYESFELGKVIKEPEKIKVKNYGITL.

This sequence belongs to the AIR synthase family.

It is found in the cytoplasm. It carries out the reaction 2-formamido-N(1)-(5-O-phospho-beta-D-ribosyl)acetamidine + ATP = 5-amino-1-(5-phospho-beta-D-ribosyl)imidazole + ADP + phosphate + H(+). It participates in purine metabolism; IMP biosynthesis via de novo pathway; 5-amino-1-(5-phospho-D-ribosyl)imidazole from N(2)-formyl-N(1)-(5-phospho-D-ribosyl)glycinamide: step 2/2. The protein is Phosphoribosylformylglycinamidine cyclo-ligase of Pyrococcus horikoshii (strain ATCC 700860 / DSM 12428 / JCM 9974 / NBRC 100139 / OT-3).